A 428-amino-acid chain; its full sequence is Adenylosuccinate synthetase (428 aa).

Residues 12-18 (GDEGKGK) and 40-42 (GHT) contribute to the GTP site. The active-site Proton acceptor is Asp13. Positions 13 and 40 each coordinate Mg(2+). IMP-binding positions include 13–16 (DEGK), 38–41 (NAGH), Thr128, Arg142, Gln223, Thr238, and Arg302. His41 serves as the catalytic Proton donor. Residue 298–304 (TTTGRPR) coordinates substrate. Residues Arg304, 330-332 (SID), and 412-414 (SVG) contribute to the GTP site.

It belongs to the adenylosuccinate synthetase family. As to quaternary structure, homodimer. It depends on Mg(2+) as a cofactor.

It is found in the cytoplasm. It catalyses the reaction IMP + L-aspartate + GTP = N(6)-(1,2-dicarboxyethyl)-AMP + GDP + phosphate + 2 H(+). It participates in purine metabolism; AMP biosynthesis via de novo pathway; AMP from IMP: step 1/2. Its function is as follows. Plays an important role in the de novo pathway of purine nucleotide biosynthesis. Catalyzes the first committed step in the biosynthesis of AMP from IMP. This Geobacillus kaustophilus (strain HTA426) protein is Adenylosuccinate synthetase.